Consider the following 105-residue polypeptide: Nitrogen fixation nifHD region GlnB-like protein 1 (105 aa).

Belongs to the P(II) protein family.

Its function is as follows. Could be involved in the regulation of nitrogen fixation. In Methanobacterium ivanovii, this protein is Nitrogen fixation nifHD region GlnB-like protein 1 (glnBA).